Reading from the N-terminus, the 804-residue chain is MGPLLERWISREGRSDGGDASGPVLFWCVLIIFAVPDAIRSSSLRLGQVAPRLVLFSNFKAFRSPKFAKILPGSDLFSPRVLGFRTRVVLLLDVFEVGFALFCKASSTMGNSLPVESKVTVEEENDRIKYIVSSMQGLGHKMEDAHAAILSLDDTTSTSFFGVYDGHGGAEVASYCAKRFHIELCNHEDYHNDLTNALDNVFFSMDENLQQSDAWRELVIPRDNGWMYFLKAGVCANFWPFPQAYTGPAYEGSTACVVVIRGDQMIVGHAGDSRCVLSRQGGLAIDLSSDHKPRTSESERERVQNAGGISLGVDCEKVMENYVIKEQWILGYFGESVTISRSIGDFAFKQNKDLNREEQMLICDPDIHTHDITGDMEFLVIASQGLWSCMESADVVAYIHVRLLEGVELRVICEELVQSGLASGENTTVILVQFKPGAFQFQYELVDPAAFDTAASNVASTSAGPAGGSDSDTSATSDEGVDDTATAGTTTTGYEAGSSTGPGSGGGSANAAFDSGGDLAANLDIATNFGSDDLAANLDIATDIDTEDVFTFINSDDTFGINSDEVELDPNFRPKPQVRRAHDGPSPTPSEIEADLNASPTRYNMRDIFEAFDKVEAELGGFPLQGHDVSSTSTNPNTATDTGSGSRTGDDDVDGAIARAMAVASSVMTGAGYEVDSTTTNPSAAADTGSYTGDEIKVDDSTSGSARGDSGELVNNDTTVADNNASGVADSTTVGDEVDPTATVAADDSNTGDKVDPPAITKATADSNTSGEVDVDATATATASASAAVADDEGTAPDDSEGSP.

The helical transmembrane segment at 19–39 (DASGPVLFWCVLIIFAVPDAI) threads the bilayer. Residues 129-434 (KYIVSSMQGL…ENTTVILVQF (306 aa)) form the PPM-type phosphatase domain. The Mn(2+) site is built by aspartate 165, glycine 166, glutamine 384, and glutamate 425. Disordered regions lie at residues 460 to 509 (STSA…GGSA), 564 to 599 (DEVE…LNAS), 623 to 653 (PLQG…DDDV), and 675 to 804 (VDST…EGSP). Low complexity predominate over residues 468-499 (GSDSDTSATSDEGVDDTATAGTTTTGYEAGSS). Residues 628 to 637 (DVSSTSTNPN) are compositionally biased toward polar residues. Positions 638 to 647 (TATDTGSGSR) are enriched in low complexity. The segment covering 713–734 (LVNNDTTVADNNASGVADSTTV) has biased composition (polar residues). Residues 776 to 789 (DATATATASASAAV) are compositionally biased toward low complexity. Residues 790–804 (ADDEGTAPDDSEGSP) show a composition bias toward acidic residues.

It belongs to the PP2C family. Mg(2+) serves as cofactor. It depends on Mn(2+) as a cofactor.

The protein resides in the membrane. The catalysed reaction is O-phospho-L-seryl-[protein] + H2O = L-seryl-[protein] + phosphate. The enzyme catalyses O-phospho-L-threonyl-[protein] + H2O = L-threonyl-[protein] + phosphate. This is Probable protein phosphatase 2C 18 from Oryza sativa subsp. japonica (Rice).